Here is a 723-residue protein sequence, read N- to C-terminus: LPS-assembly protein LptD (723 aa).

The first 23 residues, 1-23 (MNTLKLCLILYACLVLLPVRVMS), serve as a signal peptide directing secretion.

Belongs to the LptD family. Component of the lipopolysaccharide transport and assembly complex. Interacts with LptE and LptA.

It localises to the cell outer membrane. In terms of biological role, together with LptE, is involved in the assembly of lipopolysaccharide (LPS) at the surface of the outer membrane. The polypeptide is LPS-assembly protein LptD (Nitrosomonas europaea (strain ATCC 19718 / CIP 103999 / KCTC 2705 / NBRC 14298)).